Consider the following 1168-residue polypeptide: Probable serine/threonine protein kinase IRE (1168 aa).

2 disordered regions span residues 1 to 165 (MSTT…GVES) and 377 to 444 (EKQN…KIQP). Low complexity predominate over residues 16-25 (PTTISTPTST). Composition is skewed to basic and acidic residues over residues 39–54 (RHSD…KTDE) and 107–130 (QDDK…DARA). Polar residues-rich tracts occupy residues 146 to 163 (QWSQ…NPGV) and 401 to 414 (TARS…NFRM). A C2H2-type; atypical zinc finger spans residues 488 to 507 (CRICEVEIPVVHVEEHSRIC). Disordered stretches follow at residues 546 to 566 (PRAV…DLDE), 602 to 622 (GTKD…PRNS), and 717 to 744 (SSNA…LNPR). The Protein kinase domain occupies 754-1043 (FEIIKPISRG…AGEVKQHHFF (290 aa)). ATP-binding positions include 760-768 (ISRGAFGRV) and lysine 783. Catalysis depends on aspartate 877, which acts as the Proton acceptor. The 101-residue stretch at 1044–1144 (KDINWDTLAR…KNLSQLASIN (101 aa)) folds into the AGC-kinase C-terminal domain.

This sequence belongs to the protein kinase superfamily. AGC Ser/Thr protein kinase family. As to expression, highly expressed in roots, elongating root hair cells and pollen grains.

The catalysed reaction is L-seryl-[protein] + ATP = O-phospho-L-seryl-[protein] + ADP + H(+). It catalyses the reaction L-threonyl-[protein] + ATP = O-phospho-L-threonyl-[protein] + ADP + H(+). Its function is as follows. Modulates root tip growth. May play a common role in the tip growth of plant cells. This is Probable serine/threonine protein kinase IRE from Arabidopsis thaliana (Mouse-ear cress).